The chain runs to 175 residues: Protein-export protein SecB (175 aa).

Residues 153–163 (QQQPDAANGND) are compositionally biased toward polar residues. The disordered stretch occupies residues 153 to 175 (QQQPDAANGNDSGIILPPGATRQ).

Belongs to the SecB family. As to quaternary structure, homotetramer, a dimer of dimers. One homotetramer interacts with 1 SecA dimer.

The protein localises to the cytoplasm. One of the proteins required for the normal export of preproteins out of the cell cytoplasm. It is a molecular chaperone that binds to a subset of precursor proteins, maintaining them in a translocation-competent state. It also specifically binds to its receptor SecA. This Bordetella bronchiseptica (strain ATCC BAA-588 / NCTC 13252 / RB50) (Alcaligenes bronchisepticus) protein is Protein-export protein SecB.